The chain runs to 476 residues: mRNA-capping enzyme subunit beta (476 aa).

The tract at residues 1-133 is disordered; that stretch reads MNVGSILNDE…KLKSTNKPRR (133 aa). Composition is skewed to basic and acidic residues over residues 51–67 and 105–114; these read LKTK…EHSN and HPIEQDKSEK. Basic residues predominate over residues 123-132; that stretch reads SKLKSTNKPR.

The protein belongs to the fungal TPase family. In terms of assembly, heterodimer. The mRNA-capping enzyme is composed of two separate chains alpha and beta, respectively a mRNA guanylyltransferase and an mRNA 5'-triphosphate monophosphatase. It depends on Mg(2+) as a cofactor.

It localises to the nucleus. The catalysed reaction is a 5'-end triphospho-ribonucleoside in mRNA + H2O = a 5'-end diphospho-ribonucleoside in mRNA + phosphate + H(+). Functionally, first step of mRNA capping. Converts the 5'-triphosphate end of a nascent mRNA chain into a diphosphate end. This Debaryomyces hansenii (strain ATCC 36239 / CBS 767 / BCRC 21394 / JCM 1990 / NBRC 0083 / IGC 2968) (Yeast) protein is mRNA-capping enzyme subunit beta (CET1).